A 123-amino-acid chain; its full sequence is Large ribosomal subunit protein bL12 (123 aa).

This sequence belongs to the bacterial ribosomal protein bL12 family. Homodimer. Part of the ribosomal stalk of the 50S ribosomal subunit. Forms a multimeric L10(L12)X complex, where L10 forms an elongated spine to which 2 to 4 L12 dimers bind in a sequential fashion. Binds GTP-bound translation factors.

Forms part of the ribosomal stalk which helps the ribosome interact with GTP-bound translation factors. Is thus essential for accurate translation. The polypeptide is Large ribosomal subunit protein bL12 (Roseobacter denitrificans (strain ATCC 33942 / OCh 114) (Erythrobacter sp. (strain OCh 114))).